A 682-amino-acid chain; its full sequence is Potassium-transporting ATPase ATP-binding subunit (682 aa).

The next 4 helical transmembrane spans lie at 44–64 (VMAV…SGHG), 66–86 (AGFG…GNFA), 233–253 (LTFL…GVTL), and 257–277 (LLIA…LPAI). Aspartate 310 functions as the 4-aspartylphosphate intermediate in the catalytic mechanism. Residues aspartate 347, glutamate 351, 377-384 (FTAQTRMS), and lysine 395 each bind ATP. Aspartate 518 and aspartate 522 together coordinate Mg(2+). The next 3 helical transmembrane spans lie at 588–608 (FAIL…LNVM), 616–636 (AVLA…PLAL), and 658–678 (GLGG…ALVA).

This sequence belongs to the cation transport ATPase (P-type) (TC 3.A.3) family. Type IA subfamily. In terms of assembly, the system is composed of three essential subunits: KdpA, KdpB and KdpC.

The protein resides in the cell inner membrane. The catalysed reaction is K(+)(out) + ATP + H2O = K(+)(in) + ADP + phosphate + H(+). Functionally, part of the high-affinity ATP-driven potassium transport (or Kdp) system, which catalyzes the hydrolysis of ATP coupled with the electrogenic transport of potassium into the cytoplasm. This subunit is responsible for energy coupling to the transport system and for the release of the potassium ions to the cytoplasm. This is Potassium-transporting ATPase ATP-binding subunit from Xanthomonas campestris pv. campestris (strain ATCC 33913 / DSM 3586 / NCPPB 528 / LMG 568 / P 25).